Reading from the N-terminus, the 259-residue chain is MGHHGQMHAQHGVTMPADSPIGQPDRSEQRYFPATAFRTRRSTLSDAQRQTWDRRWPELGLSVGPAEDPDRPGPPLDTDAWFGRKAPVVLEIGCGNGTSTLAMAKEEPGVDVIAVEVYRRGLAQLLCAIDRDNVTNIRLIRGNALDVLQRLIAPASLTGVRVFFPDPWPKARHHKRRFLQPGTVGLIADRLLPGGVLHVATDHAGYAEHIADVGAGEPRLRPANPDSPLPISVARPTTKYETKAQDAGSAVTEFIWLRR.

Residues 1 to 73 form a disordered region; the sequence is MGHHGQMHAQ…GPAEDPDRPG (73 aa). Residues E91, E116, N143, and D166 each contribute to the S-adenosyl-L-methionine site. Residue D166 is part of the active site. Substrate contacts are provided by residues K170, D202, and 238–241; that span reads TKYE.

The protein belongs to the class I-like SAM-binding methyltransferase superfamily. TrmB family.

The catalysed reaction is guanosine(46) in tRNA + S-adenosyl-L-methionine = N(7)-methylguanosine(46) in tRNA + S-adenosyl-L-homocysteine. Its pathway is tRNA modification; N(7)-methylguanine-tRNA biosynthesis. In terms of biological role, catalyzes the formation of N(7)-methylguanine at position 46 (m7G46) in tRNA. The sequence is that of tRNA (guanine-N(7)-)-methyltransferase from Mycolicibacterium paratuberculosis (strain ATCC BAA-968 / K-10) (Mycobacterium paratuberculosis).